The primary structure comprises 1035 residues: Teashirt homolog 2 (1035 aa).

The disordered stretch occupies residues 1 to 92; the sequence is MPRRKQQAPK…ESLLSDASDQ (92 aa). Residues 13–42 are a coiled coil; the sequence is AGYAQEEQLKEEEEIKEEEEEEEDSGSVAQ. Acidic residues predominate over residues 21–37; that stretch reads LKEEEEIKEEEEEEEDS. Composition is skewed to polar residues over residues 39 to 49 and 66 to 92; these read SVAQLQGSNDP and SYQN…ASDQ. Lys189 is covalently cross-linked (Glycyl lysine isopeptide (Lys-Gly) (interchain with G-Cter in SUMO2)). 2 C2H2-type zinc fingers span residues 216 to 240 and 276 to 300; these read FRCR…ETGH and LKCM…KTKH. The tract at residues 240–266 is disordered; it reads HYQDDNRKKDKLRPTSYSKPRKRAFQD. Glycyl lysine isopeptide (Lys-Gly) (interchain with G-Cter in SUMO2) cross-links involve residues Lys307 and Lys316. The C2H2-type 3; atypical zinc finger occupies 381–405; that stretch reads LKCMECGSSHDTLQQLTTHMMVTGH. Lys418 participates in a covalent cross-link: Glycyl lysine isopeptide (Lys-Gly) (interchain with G-Cter in SUMO2). Residues 432 to 450 are compositionally biased toward low complexity; it reads SLSDAPSSDSLAPKPSSNS. Positions 432–496 are disordered; that stretch reads SLSDAPSSDS…DPLQKPLDPA (65 aa). A compositionally biased stretch (basic and acidic residues) spans 460–483; it reads ELKRESKKEKPEELRTDEKVLKSE. Residues Lys462, Lys481, Lys498, and Lys602 each participate in a glycyl lysine isopeptide (Lys-Gly) (interchain with G-Cter in SUMO2) cross-link. Disordered regions lie at residues 600–674 and 764–791; these read QVKK…VEPV and QPID…PQKH. Residues 601 to 669 show a composition bias toward basic and acidic residues; sequence VKKEPEDKEE…KDGGEKEKAQ (69 aa). Glycyl lysine isopeptide (Lys-Gly) (interchain with G-Cter in SUMO2) cross-links involve residues Lys801 and Lys821. The homeobox DNA-binding region spans 842–912; sequence RKGRQSNWNP…NVKYQLRKTG (71 aa). The C2H2-type 4 zinc finger occupies 927-949; it reads FYCSDCASQFRTPSTYISHLESH. Residues 968-977 are compositionally biased toward low complexity; it reads VEQEISRVSS. Disordered stretches follow at residues 968 to 987 and 1015 to 1035; these read VEQE…TIAG and SKTH…VDEE. The residue at position 981 (Ser981) is a Phosphoserine. The C2H2-type 5 zinc-finger motif lies at 995–1018; it reads FKCKLCCRTFVSKHAVKLHLSKTH.

Belongs to the teashirt C2H2-type zinc-finger protein family. In terms of assembly, interacts (via homeobox domain) with APBB1 (via PID domain 1). Sumoylated.

The protein localises to the nucleus. In terms of biological role, probable transcriptional regulator involved in developmental processes. May act as a transcriptional repressor (Potential). The sequence is that of Teashirt homolog 2 (TSHZ2) from Sus scrofa (Pig).